Reading from the N-terminus, the 203-residue chain is Large ribosomal subunit protein bL25 (203 aa).

Belongs to the bacterial ribosomal protein bL25 family. CTC subfamily. Part of the 50S ribosomal subunit; part of the 5S rRNA/L5/L18/L25 subcomplex. Contacts the 5S rRNA. Binds to the 5S rRNA independently of L5 and L18.

In terms of biological role, this is one of the proteins that binds to the 5S RNA in the ribosome where it forms part of the central protuberance. The chain is Large ribosomal subunit protein bL25 from Rickettsia conorii (strain ATCC VR-613 / Malish 7).